Consider the following 189-residue polypeptide: Cancer/testis antigen family 45 member A5 (189 aa).

A compositionally biased stretch (basic and acidic residues) spans methionine 1–aspartate 23. Disordered regions lie at residues methionine 1–tyrosine 27 and aspartate 82–serine 118.

It belongs to the CT45 family. As to expression, testis specific. Expressed in cancer cell lines.

It localises to the nucleus. This chain is Cancer/testis antigen family 45 member A5, found in Homo sapiens (Human).